The sequence spans 379 residues: MTKSIIASEPPSAESSGRLPWKILGQTTGFPNQDQELWWLNTAPLLNEFLAECQYDVHLQYQYLTFFRHHVIPVLGPFFAPGTTPNFASRLSKHGHPLDFSVNFQESGATVRMSLGAIGSFAGLQQDPLNQFRAREVLDKLAILYPTVDLQLFKHFESEFGINHADALKVAAKLPKLDRATKMIAIDMLKNGSMTFKVYYMVRSKAAATGLPVHTVLFNAVQRLGSAFEPGLSLLKQFLSPLCDAGETDLGLLSFDCVPTESSRIKLYAIKQVGSLDAIRNLWTLGGTMDDPTTMKGLAVLEHVCELLQFGWSGDSRVQPILFNYEIKKGSTPKPQIYIPLADRYDEFDAAKLKAVFQDLDWKRVPFYQDTGKDLASVL.

Residues 90-91, arginine 112, lysine 197, arginine 264, lysine 266, tyrosine 268, and tyrosine 338 contribute to the substrate site; that span reads RL.

Belongs to the tryptophan dimethylallyltransferase family.

It catalyses the reaction aspulvinone E + 2 dimethylallyl diphosphate = aspulvinone H + 2 diphosphate. It carries out the reaction butyrolactone II + dimethylallyl diphosphate = butyrolactone I + diphosphate. Its pathway is secondary metabolite biosynthesis. In terms of biological role, trans-prenyltransferase that acts in both the aspulvinones and butyrolactones pathways. Prenylates aspulvinone E and butyrolactone II to yield repectively aspulvinone H and butyrolactone I. The polypeptide is Trans-prenyltransferase abpB (Aspergillus terreus (strain NIH 2624 / FGSC A1156)).